Reading from the N-terminus, the 101-residue chain is Vacuolar ATPase assembly integral membrane protein VMA21 (101 aa).

The Cytoplasmic segment spans residues methionine 1–serine 25. Residues threonine 26–phenylalanine 46 form a helical membrane-spanning segment. The Lumenal portion of the chain corresponds to threonine 47–tyrosine 65. Residues phenylalanine 66–valine 86 form a helical membrane-spanning segment. At alanine 87–aspartate 101 the chain is on the cytoplasmic side.

This sequence belongs to the VMA21 family. In terms of assembly, associates with the V0 complex of the vacuolar ATPase (V-ATPase). Interacts with ATP6AP2.

It is found in the endoplasmic reticulum membrane. The protein localises to the endoplasmic reticulum-Golgi intermediate compartment membrane. Its subcellular location is the cytoplasmic vesicle. The protein resides in the COPII-coated vesicle membrane. Its function is as follows. Required for the assembly of the V0 complex of the vacuolar ATPase (V-ATPase) in the endoplasmic reticulum. The sequence is that of Vacuolar ATPase assembly integral membrane protein VMA21 from Bos taurus (Bovine).